The chain runs to 477 residues: Glycogen synthase (477 aa).

Lys16 is an ADP-alpha-D-glucose binding site.

The protein belongs to the glycosyltransferase 1 family. Bacterial/plant glycogen synthase subfamily.

It carries out the reaction [(1-&gt;4)-alpha-D-glucosyl](n) + ADP-alpha-D-glucose = [(1-&gt;4)-alpha-D-glucosyl](n+1) + ADP + H(+). It functions in the pathway glycan biosynthesis; glycogen biosynthesis. In terms of biological role, synthesizes alpha-1,4-glucan chains using ADP-glucose. The polypeptide is Glycogen synthase (Oceanobacillus iheyensis (strain DSM 14371 / CIP 107618 / JCM 11309 / KCTC 3954 / HTE831)).